The sequence spans 96 residues: Small ribosomal subunit protein uS19 (96 aa).

This sequence belongs to the universal ribosomal protein uS19 family.

Protein S19 forms a complex with S13 that binds strongly to the 16S ribosomal RNA. In Gemmatimonas aurantiaca (strain DSM 14586 / JCM 11422 / NBRC 100505 / T-27), this protein is Small ribosomal subunit protein uS19.